The chain runs to 182 residues: Probable phosphoheptose isomerase (182 aa).

Residues 29 to 182 form the SIS domain; it reads ISSAISSGNK…MICAMIDEKF (154 aa). 44-46 lines the substrate pocket; sequence NGG. Positions 53 and 57 each coordinate Zn(2+). Substrate-binding positions include Glu57, 86–87, 112–114, Ser117, and Gln164; these read ND and STS. 2 residues coordinate Zn(2+): Gln164 and His172.

The protein belongs to the SIS family. GmhA subfamily. Zn(2+) is required as a cofactor.

Its subcellular location is the cytoplasm. It catalyses the reaction 2 D-sedoheptulose 7-phosphate = D-glycero-alpha-D-manno-heptose 7-phosphate + D-glycero-beta-D-manno-heptose 7-phosphate. It participates in carbohydrate biosynthesis; D-glycero-D-manno-heptose 7-phosphate biosynthesis; D-glycero-alpha-D-manno-heptose 7-phosphate and D-glycero-beta-D-manno-heptose 7-phosphate from sedoheptulose 7-phosphate: step 1/1. Catalyzes the isomerization of sedoheptulose 7-phosphate in D-glycero-D-manno-heptose 7-phosphate. The protein is Probable phosphoheptose isomerase of Thermoplasma acidophilum (strain ATCC 25905 / DSM 1728 / JCM 9062 / NBRC 15155 / AMRC-C165).